The primary structure comprises 356 residues: MVDAAVLEKLEAGFKKLEASDSKSLLKKYLTREVFDKLKTKKTPSFGSTLLDCIQSGLENHDSGVGIYAPDAEAYTVFADLFDPIIEDYHGGFKKTDKHPPKNFGDVDTLANLDPNGEYVISTRVRCGRSMQGYPFNPCLTEAQYKEMEQKVSTTLSSLEGELKGQFYPLTGMSKEVQQKLIDDHFLFKEGDRFLQAANACRFWPSGRGIYHNDNKTFLVWCNEEDHLRIISMQPGGDLGQVYRRLVHAVNEIEKRIPFSHDDRLGFLTFCPTNLGTTLRASVHIKLPKLAADRTKLEEVAGKFNLQVRGSTGEHTEAEGGVYDISNKRRMGLTEYDAVKEMNDGILELIKIEGSL.

The 84-residue stretch at Glu-8–Gly-91 folds into the Phosphagen kinase N-terminal domain. Gly-64–Tyr-68 is a substrate binding site. The 238-residue stretch at Tyr-119–Leu-356 folds into the Phosphagen kinase C-terminal domain. Residues Ser-122–Arg-126 and His-185 contribute to the ATP site. Position 225 (Glu-225) interacts with substrate. Arg-229 serves as a coordination point for ATP. Cys-271 lines the substrate pocket. ATP-binding positions include Arg-280–His-284 and Arg-309–Glu-314. Substrate is bound at residue Glu-314.

It belongs to the ATP:guanido phosphotransferase family.

The enzyme catalyses L-arginine + ATP = N(omega)-phospho-L-arginine + ADP + H(+). The chain is Arginine kinase (ARGK) from Schistocerca americana (American grasshopper).